A 105-amino-acid polypeptide reads, in one-letter code: Small ribosomal subunit protein uS10c (105 aa).

This sequence belongs to the universal ribosomal protein uS10 family. In terms of assembly, part of the 30S ribosomal subunit.

The protein localises to the plastid. The protein resides in the cyanelle. Its function is as follows. Involved in the binding of tRNA to the ribosomes. This Cyanophora paradoxa protein is Small ribosomal subunit protein uS10c (rps10).